A 305-amino-acid polypeptide reads, in one-letter code: Ankyrin repeat domain-containing protein 23 (305 aa).

Positions Gln41–Leu72 form a coiled coil. A compositionally biased stretch (basic residues) spans Lys83–Pro92. The tract at residues Lys83–Gln104 is disordered. ANK repeat units lie at residues Leu143–Ala172, Leu176–Ala205, Ile209–Ala238, and Glu242–Val271. The interval Arg178 to Gln195 is interaction with TTN.

In terms of assembly, interacts with titin/TTN and MYPN. As to expression, mainly expressed in heart, skeletal muscle and brown adipose tissues.

The protein localises to the nucleus. Its function is as follows. May be involved in the energy metabolism. Could be a molecular link between myofibrillar stretch-induced signaling pathways and muscle gene expression. The chain is Ankyrin repeat domain-containing protein 23 (ANKRD23) from Homo sapiens (Human).